Consider the following 406-residue polypeptide: Transposase for insertion sequence element IS1001 (406 aa).

The protein belongs to the transposase 12 family.

Functionally, involved in the transposition of the insertion sequence. This Bordetella parapertussis protein is Transposase for insertion sequence element IS1001 (tnpA).